We begin with the raw amino-acid sequence, 421 residues long: Proton/sodium-glutamate symport protein (421 aa).

Topologically, residues 1–3 are cytoplasmic; the sequence is MRK. Residues 4-24 form a helical membrane-spanning segment; it reads IGLAWQIFIGLILGIIVGAIF. The Extracellular segment spans residues 25 to 43; sequence YGNPKVAAYLQPIGDIFLR. A helical transmembrane segment spans residues 44 to 64; it reads LIKMIVIPIVISSLVVGVASV. Residues 65–77 lie on the Cytoplasmic side of the membrane; sequence GDLKKLGKLGGKT. A helical transmembrane segment spans residues 78–98; sequence IIYFEIITTIAIVVGLLAANI. Topologically, residues 99–148 are extracellular; the sequence is FQPGAGVNMKSLEKTDIQSYVDTTNEVQHHSMVETFVNIVPKNIFESLST. Residues 149–169 form a helical membrane-spanning segment; it reads GDMLPIIFFSVMFGLGVAAIG. Residues 170–198 are Cytoplasmic-facing; it reads EKGKPVLQFFQGTAEAMFYVTNQIMKFAP. Residues 199 to 219 form a helical membrane-spanning segment; sequence FGVFALIGVTVSKFGVESLIP. The Extracellular portion of the chain corresponds to 220–222; sequence LSK. The helical transmembrane segment at 223–243 threads the bilayer; the sequence is LVIVVYATMLFFIFAVLGGVA. A topological domain (cytoplasmic) is located at residue Lys244. A helical membrane pass occupies residues 245 to 265; it reads LFGINIFHIIKILKDELILAY. At 266 to 306 the chain is on the extracellular side; the sequence is STASSETVLPRIMDKMEKFGCPKAITSFVIPTGYSFNLDGS. The helical transmembrane segment at 307-327 threads the bilayer; it reads TLYQALAAIFIAQLYGIDMSV. Over 328-330 the chain is Cytoplasmic; the sequence is SQQ. 2 consecutive transmembrane segments (helical) span residues 331–351 and 352–372; these read ISLLLVLMVTSKGIAGVPGVS and FVVLLATLGTVGIPVEGLAFI. Residues 373–421 are Cytoplasmic-facing; that stretch reads AGIDRILDMARTAVNVIGNSLAAIIMSKWEGQYNEEKGKQYLAELQQSA.

This sequence belongs to the dicarboxylate/amino acid:cation symporter (DAACS) (TC 2.A.23) family. As to quaternary structure, homotrimer.

It is found in the cell membrane. Its function is as follows. This carrier protein is part of the Na(+)-dependent, binding-protein-independent glutamate-aspartate transport system. In Bacillus caldotenax, this protein is Proton/sodium-glutamate symport protein (gltT).